We begin with the raw amino-acid sequence, 428 residues long: Serine--tRNA ligase (428 aa).

An L-serine-binding site is contributed by 231–233; that stretch reads TAE. 262 to 264 contributes to the ATP binding site; the sequence is RSE. Position 285 (glutamate 285) interacts with L-serine. An ATP-binding site is contributed by 349-352; sequence EISS. Serine 385 serves as a coordination point for L-serine.

The protein belongs to the class-II aminoacyl-tRNA synthetase family. Type-1 seryl-tRNA synthetase subfamily. As to quaternary structure, homodimer. The tRNA molecule binds across the dimer.

The protein localises to the cytoplasm. The enzyme catalyses tRNA(Ser) + L-serine + ATP = L-seryl-tRNA(Ser) + AMP + diphosphate + H(+). The catalysed reaction is tRNA(Sec) + L-serine + ATP = L-seryl-tRNA(Sec) + AMP + diphosphate + H(+). Its pathway is aminoacyl-tRNA biosynthesis; selenocysteinyl-tRNA(Sec) biosynthesis; L-seryl-tRNA(Sec) from L-serine and tRNA(Sec): step 1/1. In terms of biological role, catalyzes the attachment of serine to tRNA(Ser). Is also able to aminoacylate tRNA(Sec) with serine, to form the misacylated tRNA L-seryl-tRNA(Sec), which will be further converted into selenocysteinyl-tRNA(Sec). This chain is Serine--tRNA ligase, found in Staphylococcus aureus (strain MSSA476).